Consider the following 227-residue polypeptide: Killer cell lectin-like receptor subfamily B member 1A (227 aa).

Residues 1–45 (MDTARVYFGLKPPRTPGAWHESPPSLPPDACRCPRSHRLALKLSC) are Cytoplasmic-facing. An LCK-binding motif motif is present at residues 31–34 (CRCP). The chain crosses the membrane as a helical; Signal-anchor for type II membrane protein span at residues 46-66 (AGLILLVVTLIGMSVLVRVLI). Topologically, residues 67-227 (QKPSIEKCYV…TLSNYVGYGH (161 aa)) are extracellular. The region spanning 93 to 212 (ECPQDWLSHR…NSDNRWICQK (120 aa)) is the C-type lectin domain. Cystine bridges form between Cys94-Cys105, Cys122-Cys210, and Cys189-Cys202.

As to quaternary structure, homodimer; disulfide-linked. Interacts with tyrosine kinase LCK. Expressed in natural killer cells.

It localises to the membrane. In terms of biological role, plays a stimulatory role on natural killer (NK) cell cytotoxicity. The chain is Killer cell lectin-like receptor subfamily B member 1A (Klrb1a) from Mus musculus (Mouse).